Here is a 354-residue protein sequence, read N- to C-terminus: Histidinol-phosphate aminotransferase (354 aa).

At Lys215 the chain carries N6-(pyridoxal phosphate)lysine.

It belongs to the class-II pyridoxal-phosphate-dependent aminotransferase family. Histidinol-phosphate aminotransferase subfamily. In terms of assembly, homodimer. Pyridoxal 5'-phosphate is required as a cofactor.

The catalysed reaction is L-histidinol phosphate + 2-oxoglutarate = 3-(imidazol-4-yl)-2-oxopropyl phosphate + L-glutamate. It participates in amino-acid biosynthesis; L-histidine biosynthesis; L-histidine from 5-phospho-alpha-D-ribose 1-diphosphate: step 7/9. This chain is Histidinol-phosphate aminotransferase, found in Vesicomyosocius okutanii subsp. Calyptogena okutanii (strain HA).